The following is a 242-amino-acid chain: MMMDLFETGSYFFYLDGENVTLQPLEVAEGSPLYPGSDGTLSPCQDQMPPEAGSDSSGEEHVLAPPGLQPPHCPGQCLIWACKTCKRKSAPTDRRKAATLRERRRLKKINEAFEALKRRTVANPNQRLPKVEILRSAINYIERLQDLLHRLDQQDKMQELGVDPFSYRPKQENLEGADFLRTCSSQWPSVSDHSRGLVMTAKEGGTNIDSSASSSLRCLSSIVDSISSEEHTLPCVEEVGEK.

Residues 31 to 63 (SPLYPGSDGTLSPCQDQMPPEAGSDSSGEEHVL) are disordered. One can recognise a bHLH domain in the interval 93 to 144 (DRRKAATLRERRRLKKINEAFEALKRRTVANPNQRLPKVEILRSAINYIERL).

In terms of assembly, efficient DNA binding requires dimerization with another bHLH protein.

It is found in the nucleus. Functionally, involved in muscle differentiation (myogenic factor). Induces fibroblasts to differentiate into myoblasts. Probable sequence specific DNA-binding protein. The polypeptide is Myogenic factor 6 (MYF6) (Sus scrofa (Pig)).